The chain runs to 485 residues: Peroxisomal catalase (485 aa).

Residues His53 and Asn126 contribute to the active site. Tyr336 contributes to the heme binding site.

It belongs to the catalase family. Homotetramer. It depends on heme as a cofactor.

The protein resides in the peroxisome matrix. It carries out the reaction 2 H2O2 = O2 + 2 H2O. Its function is as follows. Catalyzes the degradation of hydrogen peroxide (H(2)O(2)) generated by peroxisomal oxidases to water and oxygen, thereby protecting cells from the toxic effects of hydrogen peroxide. The protein is Peroxisomal catalase (POX9) of Candida tropicalis (Yeast).